The following is a 205-amino-acid chain: Guanylyl cyclase-activating protein 1 (205 aa).

Gly2 carries the N-myristoyl glycine lipid modification. A Deamidated asparagine modification is found at Asn3. 4 EF-hand domains span residues 30-48, 50-85, 86-121, and 129-164; these read SGQL…KNLS, ASNQ…VLKG, KVEQ…IRAI, and TAEE…DELL. Positions 63, 65, 67, 69, 74, 99, 101, 103, 105, 110, 142, 144, 146, 148, and 153 each coordinate Ca(2+).

As to expression, retina.

Its function is as follows. Regulatory protein that inhibits guanylyl cyclase when free calcium ions concentration is elevated. This Ca(2+)-sensitive regulation of retinal guanylyl cyclase is a key event in recovery of the dark state of rod photoreceptors following light exposure. This is Guanylyl cyclase-activating protein 1 (GUCA1A) from Lithobates pipiens (Northern leopard frog).